Reading from the N-terminus, the 211-residue chain is Stromal cell-derived factor 2 (211 aa).

The N-terminal stretch at 1–18 (MAVLSLLLLGGLWSAVGA) is a signal peptide. MIR domains lie at 21-75 (MAVV…IRGK), 83-138 (GTPI…VLCN), and 139-193 (GPYW…AMEG).

In terms of tissue distribution, ubiquitously expressed with highest expression in liver and kidney.

It localises to the secreted. The sequence is that of Stromal cell-derived factor 2 (Sdf2) from Mus musculus (Mouse).